Here is a 397-residue protein sequence, read N- to C-terminus: Lysophospholipid transporter LplT (397 aa).

The next 11 membrane-spanning stretches (helical) occupy residues 16 to 36 (MMAV…LLFA), 53 to 73 (VLQM…GQVA), 91 to 111 (LGAV…LVGV), 139 to 159 (LMES…GMLA), 164 to 184 (GAAL…NLLI), 229 to 249 (WGAG…ALGI), 257 to 277 (YLNA…AKLV), 282 to 302 (VSRC…FSLQ), 304 to 324 (AALP…FFVV), 344 to 364 (IAVQ…LYSL), and 372 to 392 (VVGI…GLWL).

Belongs to the major facilitator superfamily. LplT (TC 2.A.1.42) family.

The protein resides in the cell inner membrane. Its function is as follows. Catalyzes the facilitated diffusion of 2-acyl-glycero-3-phosphoethanolamine (2-acyl-GPE) into the cell. In Cronobacter sakazakii (strain ATCC BAA-894) (Enterobacter sakazakii), this protein is Lysophospholipid transporter LplT.